Here is a 498-residue protein sequence, read N- to C-terminus: Probable cytosol aminopeptidase (498 aa).

Residues K264 and D269 each coordinate Mn(2+). K276 is a catalytic residue. Residues D287, D346, and E348 each contribute to the Mn(2+) site. R350 is an active-site residue.

The protein belongs to the peptidase M17 family. Mn(2+) is required as a cofactor.

The protein resides in the cytoplasm. The enzyme catalyses Release of an N-terminal amino acid, Xaa-|-Yaa-, in which Xaa is preferably Leu, but may be other amino acids including Pro although not Arg or Lys, and Yaa may be Pro. Amino acid amides and methyl esters are also readily hydrolyzed, but rates on arylamides are exceedingly low.. It carries out the reaction Release of an N-terminal amino acid, preferentially leucine, but not glutamic or aspartic acids.. Functionally, presumably involved in the processing and regular turnover of intracellular proteins. Catalyzes the removal of unsubstituted N-terminal amino acids from various peptides. This Xanthobacter autotrophicus (strain ATCC BAA-1158 / Py2) protein is Probable cytosol aminopeptidase.